A 312-amino-acid chain; its full sequence is Triacylglycerol lipase (312 aa).

The signal sequence occupies residues 1-25; it reads MNKIIILIALSLFSSSIWAGTSAHA. The AB hydrolase-1 domain occupies 37 to 228; sequence PIVLVHGLFG…VNGVRYYSWS (192 aa). Leu44 is a binding site for substrate. The active-site Nucleophile is the Ser110. Position 111 (His111) interacts with substrate. Cys212 and Cys262 are disulfide-bonded. Residue Asp238 participates in Ca(2+) binding. Active-site charge relay system residues include Asp256 and His278. Ca(2+)-binding residues include Asp280, Gly284, and Ile288.

Belongs to the AB hydrolase superfamily. Pseudomonas lipase family. As to quaternary structure, monomer. Requires Ca(2+) as cofactor.

Its subcellular location is the secreted. The catalysed reaction is a triacylglycerol + H2O = a diacylglycerol + a fatty acid + H(+). Functionally, catalyzes the hydrolysis of triacylglycerol. The polypeptide is Triacylglycerol lipase (Vibrio cholerae serotype O1 (strain ATCC 39315 / El Tor Inaba N16961)).